Reading from the N-terminus, the 292-residue chain is Glutamate racemase (292 aa).

Residues 28–29 (DS) and 60–61 (YG) each bind substrate. The active-site Proton donor/acceptor is the cysteine 91. Position 92 to 93 (92 to 93 (NT)) interacts with substrate. Cysteine 200 (proton donor/acceptor) is an active-site residue. 201 to 202 (TH) contributes to the substrate binding site.

This sequence belongs to the aspartate/glutamate racemases family.

It carries out the reaction L-glutamate = D-glutamate. It functions in the pathway cell wall biogenesis; peptidoglycan biosynthesis. Provides the (R)-glutamate required for cell wall biosynthesis. The polypeptide is Glutamate racemase (Nostoc sp. (strain PCC 7120 / SAG 25.82 / UTEX 2576)).